Consider the following 48-residue polypeptide: Large ribosomal subunit protein bL33A (48 aa).

This sequence belongs to the bacterial ribosomal protein bL33 family.

The sequence is that of Large ribosomal subunit protein bL33A from Streptococcus agalactiae serotype V (strain ATCC BAA-611 / 2603 V/R).